A 96-amino-acid chain; its full sequence is Prokineticin Bm8-f (96 aa).

A signal peptide spans Met-1 to Gly-19. 5 disulfides stabilise this stretch: Cys-26/Cys-38, Cys-32/Cys-50, Cys-37/Cys-78, Cys-60/Cys-86, and Cys-80/Cys-95.

It belongs to the AVIT (prokineticin) family. As to expression, expressed by the skin glands.

The protein localises to the secreted. In terms of biological role, potent agonist for both PKR1/PROKR1 and PKR2/PROKR2, and inducer of a potent and long-lasting hyperalgesia. Also potentiates capsaicin-induced TRPV1 current, when tested on DRG neurons. At subnanomolar concentrations, this protein both induces potent chemotaxis of macrophages and stimulates LPS-induced production of the pro-inflammatory cytokines IL-1 and IL-12. In vivo, potently stimulates the contraction of the guinea-pig gastrointestinal (GI) smooth muscle (nanomolar concentration). This is Prokineticin Bm8-f from Bombina maxima (Giant fire-bellied toad).